The following is a 73-amino-acid chain: Small ribosomal subunit protein bS18c (73 aa).

This sequence belongs to the bacterial ribosomal protein bS18 family. As to quaternary structure, part of the 30S ribosomal subunit.

Its subcellular location is the plastid. It is found in the chloroplast. This Nephroselmis olivacea (Green alga) protein is Small ribosomal subunit protein bS18c.